Here is a 105-residue protein sequence, read N- to C-terminus: Probable guanidinium efflux system subunit GdnD (105 aa).

4 helical membrane passes run methionine 1–methionine 21, tryptophan 32–glutamate 52, alanine 59–tyrosine 79, and alanine 85–serine 105.

Belongs to the drug/metabolite transporter (DMT) superfamily. Small multidrug resistance (SMR) (TC 2.A.7.1) family. YkkC/YkkD subfamily. The efflux pump is composed of GdnC and GdnD.

Its subcellular location is the cell membrane. In terms of biological role, probably involved in guanidinium transport. In vitro, confers resistance to a broad range of toxic compounds such as cationic dyes, neutral and anionic antimicrobials. The chain is Probable guanidinium efflux system subunit GdnD from Bacillus subtilis (strain 168).